A 338-amino-acid chain; its full sequence is Diacylglycerol acyltransferase/mycolyltransferase Ag85A (338 aa).

Positions 1 to 42 are cleaved as a signal peptide; it reads MQLVDRVRGAVTGMSRRLVVGAVGAALVSGLVGAVGGTATAG. Position 85 to 86 (85 to 86) interacts with substrate; sequence LR. The fibronectin-binding stretch occupies residues 101–111; the sequence is FEWYDQSGLSV. Cysteines 130 and 135 form a disulfide. Residues serine 169 and aspartate 197 each contribute to the substrate site. Serine 169 (nucleophile) is an active-site residue. Glutamate 273 is a catalytic residue. Residues 275–278, lysine 282, and 305–307 contribute to the substrate site; these read FVRT and HSW. Histidine 305 is a catalytic residue.

This sequence belongs to the mycobacterial A85 antigen family. As to quaternary structure, homodimer.

It localises to the secreted. Its subcellular location is the cell wall. The protein resides in the cytoplasm. The catalysed reaction is an acyl-CoA + a 1,2-diacyl-sn-glycerol = a triacyl-sn-glycerol + CoA. It carries out the reaction 2 alpha,alpha'-trehalose 6-mycolate = alpha,alpha'-trehalose 6,6'-bismycolate + alpha,alpha-trehalose. Functionally, the antigen 85 proteins (FbpA, FbpB, FbpC) are responsible for the high affinity of mycobacteria for fibronectin, a large adhesive glycoprotein, which facilitates the attachment of M.tuberculosis to murine alveolar macrophages (AMs). They also help to maintain the integrity of the cell wall by catalyzing the transfer of mycolic acids to cell wall arabinogalactan, and through the synthesis of alpha,alpha-trehalose dimycolate (TDM, cord factor). They catalyze the transfer of a mycoloyl residue from one molecule of alpha,alpha-trehalose monomycolate (TMM) to another TMM, leading to the formation of TDM. FbpA mediates triacylglycerol (TAG) formation with long-chain acyl-CoA as the acyl donor and 1,2-dipalmitoyl-sn-glycerol (1,2-dipalmitin) as the acyl acceptor. It has a preference for C26:0-CoA over C18:1-CoA. The sequence is that of Diacylglycerol acyltransferase/mycolyltransferase Ag85A (fbpA) from Mycobacterium bovis (strain ATCC BAA-935 / AF2122/97).